The chain runs to 202 residues: uncharacterized protein (202 aa).

The disordered stretch occupies residues 164–202 (DTDSEQESDQESDQDSDQESEESDQESDQDSDQDSEGSE). Over residues 165-202 (TDSEQESDQESDQDSDQESEESDQESDQDSDQDSEGSE) the composition is skewed to acidic residues.

This is an uncharacterized protein from Acanthamoeba polyphaga mimivirus (APMV).